Consider the following 298-residue polypeptide: Acetylglutamate kinase (298 aa).

Residues 69–70 (GG), R91, and N196 each bind substrate.

The protein belongs to the acetylglutamate kinase family. ArgB subfamily.

It is found in the cytoplasm. It carries out the reaction N-acetyl-L-glutamate + ATP = N-acetyl-L-glutamyl 5-phosphate + ADP. Its pathway is amino-acid biosynthesis; L-arginine biosynthesis; N(2)-acetyl-L-ornithine from L-glutamate: step 2/4. Catalyzes the ATP-dependent phosphorylation of N-acetyl-L-glutamate. The polypeptide is Acetylglutamate kinase (Bradyrhizobium sp. (strain BTAi1 / ATCC BAA-1182)).